A 146-amino-acid chain; its full sequence is Large ribosomal subunit protein uL16 (146 aa).

This sequence belongs to the universal ribosomal protein uL16 family. In terms of assembly, part of the 50S ribosomal subunit.

Its function is as follows. Binds 23S rRNA and is also seen to make contacts with the A and possibly P site tRNAs. The protein is Large ribosomal subunit protein uL16 of Caulobacter sp. (strain K31).